We begin with the raw amino-acid sequence, 444 residues long: Adiponectin receptor protein (444 aa).

Residues 1-13 show a composition bias toward polar residues; that stretch reads MDSATNLLEQQGS. The interval 1 to 24 is disordered; it reads MDSATNLLEQQGSAADVSGGSHPA. At 1–204 the chain is on the cytoplasmic side; sequence MDSATNLLEQ…KSIFRVHTET (204 aa). A helical transmembrane segment spans residues 205–225; it reads GNIWTHLLGCIAFIGVALYFI. The Extracellular portion of the chain corresponds to 226-237; that stretch reads SRPSVEIQTQEK. A helical transmembrane segment spans residues 238–258; it reads IVFGAFFIGAIVCLGFSFAFH. A Zn(2+)-binding site is contributed by histidine 258. The Cytoplasmic portion of the chain corresponds to 259–276; it reads TLSCHSVEMGRLFSKLDY. A helical transmembrane segment spans residues 277 to 297; sequence CGIALLIMGSFVPWLYYGFYC. The Extracellular segment spans residues 298-302; that stretch reads HYQPK. Residues 303–323 traverse the membrane as a helical segment; that stretch reads VIYLSVVSILGILSIVVSLWD. The Cytoplasmic portion of the chain corresponds to 324–334; that stretch reads KFSEPALRPLR. The helical transmembrane segment at 335 to 355 threads the bilayer; that stretch reads AGVFMSFGLSGVIPAIHYSIM. The Extracellular portion of the chain corresponds to 356–365; that stretch reads EGWFSQMSRA. The helical transmembrane segment at 366–386 threads the bilayer; it reads SLGWLILMGLLYILGALLYAL. The Cytoplasmic segment spans residues 387-405; it reads RVPERWFPGKFDIWGQSHQ. Residues histidine 404 and histidine 408 each coordinate Zn(2+). Residues 406–426 form a helical membrane-spanning segment; the sequence is IFHILVIAAAFVHYHGISEMA. Over 427 to 444 the chain is Extracellular; it reads MYRVMYSECTVPIEPITF.

It belongs to the ADIPOR family. As to expression, in larval and adult brain, expressed in insulin-producing cells and in neurons of the subesophageal region. Also expressed in lateral neurons of the adult brain (at protein level). In third instar larvae, expressed in central nervous system (CNS), imaginal disk, salivary gland, fat body, gut and malphigian tubules.

Its subcellular location is the cell membrane. In terms of biological role, adiponectin receptor. In insulin-producing cells, regulates insulin secretion and controls glucose and lipid metabolism. In Drosophila melanogaster (Fruit fly), this protein is Adiponectin receptor protein (AdipoR).